The primary structure comprises 637 residues: Nuclear receptor subfamily 2 group C member 1-A (637 aa).

A DNA-binding region (nuclear receptor) is located at residues Val-149–Cys-224. 2 consecutive NR C4-type zinc fingers follow at residues Cys-152 to Cys-172 and Cys-188 to Cys-207. The NR LBD domain maps to Cys-383–Glu-624.

Belongs to the nuclear hormone receptor family. NR2 subfamily.

Its subcellular location is the nucleus. Its function is as follows. Orphan nuclear receptor. Binds the IR7 element in the promoter of its own gene in an autoregulatory negative feedback mechanism. Primarily repressor of a broad range of genes. Binds to hormone response elements (HREs) consisting of two 5'-AGGTCA-3' half site direct repeat consensus sequences. The protein is Nuclear receptor subfamily 2 group C member 1-A (nr2c1-a) of Xenopus laevis (African clawed frog).